The chain runs to 227 residues: MAYPFQLGFQDATSPIMEELLHFHDHTLMIVFLISSLVLYIISLMLTTKLTHTSTMDAQEVETIWTILPAIILILIALPSLRILYMMDEINNPSLTVKTMGHQWYWSYEYTDYEDLNFDSYMIPTQELKPGELRLLEVDNRVVLPMEMTIRMLISSEDVLHSWAVPSLGLKTDAIPGRLNQTTLMATRPGLYYGQCSEICGSNHSFMPIVLELVPLTYFEKWSASML.

Residues 1 to 14 lie on the Mitochondrial intermembrane side of the membrane; that stretch reads MAYPFQLGFQDATS. A helical membrane pass occupies residues 15 to 45; it reads PIMEELLHFHDHTLMIVFLISSLVLYIISLM. At 46-59 the chain is on the mitochondrial matrix side; it reads LTTKLTHTSTMDAQ. The helical transmembrane segment at 60-87 threads the bilayer; sequence EVETIWTILPAIILILIALPSLRILYMM. Over 88–227 the chain is Mitochondrial intermembrane; that stretch reads DEINNPSLTV…YFEKWSASML (140 aa). The Cu cation site is built by H161, C196, E198, C200, H204, and M207. Position 198 (E198) interacts with Mg(2+). Y218 is modified (phosphotyrosine).

Belongs to the cytochrome c oxidase subunit 2 family. In terms of assembly, component of the cytochrome c oxidase (complex IV, CIV), a multisubunit enzyme composed of 14 subunits. The complex is composed of a catalytic core of 3 subunits MT-CO1, MT-CO2 and MT-CO3, encoded in the mitochondrial DNA, and 11 supernumerary subunits COX4I, COX5A, COX5B, COX6A, COX6B, COX6C, COX7A, COX7B, COX7C, COX8 and NDUFA4, which are encoded in the nuclear genome. The complex exists as a monomer or a dimer and forms supercomplexes (SCs) in the inner mitochondrial membrane with NADH-ubiquinone oxidoreductase (complex I, CI) and ubiquinol-cytochrome c oxidoreductase (cytochrome b-c1 complex, complex III, CIII), resulting in different assemblies (supercomplex SCI(1)III(2)IV(1) and megacomplex MCI(2)III(2)IV(2)). Found in a complex with TMEM177, COA6, COX18, COX20, SCO1 and SCO2. Interacts with TMEM177 in a COX20-dependent manner. Interacts with COX20. Interacts with COX16. Requires Cu cation as cofactor.

It is found in the mitochondrion inner membrane. It carries out the reaction 4 Fe(II)-[cytochrome c] + O2 + 8 H(+)(in) = 4 Fe(III)-[cytochrome c] + 2 H2O + 4 H(+)(out). In terms of biological role, component of the cytochrome c oxidase, the last enzyme in the mitochondrial electron transport chain which drives oxidative phosphorylation. The respiratory chain contains 3 multisubunit complexes succinate dehydrogenase (complex II, CII), ubiquinol-cytochrome c oxidoreductase (cytochrome b-c1 complex, complex III, CIII) and cytochrome c oxidase (complex IV, CIV), that cooperate to transfer electrons derived from NADH and succinate to molecular oxygen, creating an electrochemical gradient over the inner membrane that drives transmembrane transport and the ATP synthase. Cytochrome c oxidase is the component of the respiratory chain that catalyzes the reduction of oxygen to water. Electrons originating from reduced cytochrome c in the intermembrane space (IMS) are transferred via the dinuclear copper A center (CU(A)) of subunit 2 and heme A of subunit 1 to the active site in subunit 1, a binuclear center (BNC) formed by heme A3 and copper B (CU(B)). The BNC reduces molecular oxygen to 2 water molecules using 4 electrons from cytochrome c in the IMS and 4 protons from the mitochondrial matrix. The polypeptide is Cytochrome c oxidase subunit 2 (MT-CO2) (Felis catus (Cat)).